Here is a 157-residue protein sequence, read N- to C-terminus: Class-10 pathogenesis-related protein 1 (157 aa).

Belongs to the BetVI family. As to expression, expressed in roots. Detected in nodules and leaves, but not in stems and flowers.

The sequence is that of Class-10 pathogenesis-related protein 1 (PR10-1) from Medicago truncatula (Barrel medic).